Consider the following 196-residue polypeptide: Nucleoid occlusion factor SlmA (196 aa).

The region spanning 6-66 (RNRREEILQA…GLIEFVEDTL (61 aa)) is the HTH tetR-type domain. Positions 29–48 (TTAKLAANLGVSEAALYRHF) form a DNA-binding region, H-T-H motif. A coiled-coil region spans residues 108 to 135 (DALMGEHDRLRGRMEDLFNRIESSIKQI).

Belongs to the nucleoid occlusion factor SlmA family. As to quaternary structure, homodimer. Interacts with FtsZ.

The protein resides in the cytoplasm. The protein localises to the nucleoid. In terms of biological role, required for nucleoid occlusion (NO) phenomenon, which prevents Z-ring formation and cell division over the nucleoid. Acts as a DNA-associated cell division inhibitor that binds simultaneously chromosomal DNA and FtsZ, and disrupts the assembly of FtsZ polymers. SlmA-DNA-binding sequences (SBS) are dispersed on non-Ter regions of the chromosome, preventing FtsZ polymerization at these regions. The polypeptide is Nucleoid occlusion factor SlmA (Idiomarina loihiensis (strain ATCC BAA-735 / DSM 15497 / L2-TR)).